A 77-amino-acid polypeptide reads, in one-letter code: Large ribosomal subunit protein bL28 (77 aa).

It belongs to the bacterial ribosomal protein bL28 family.

In Verminephrobacter eiseniae (strain EF01-2), this protein is Large ribosomal subunit protein bL28.